The primary structure comprises 299 residues: Nitrogenase iron protein (299 aa).

11 to 18 contacts ATP; the sequence is GKGGIGKS. A [4Fe-4S] cluster-binding site is contributed by cysteine 99. ADP-ribosylarginine; by dinitrogenase reductase ADP-ribosyltransferase is present on arginine 102. Cysteine 133 serves as a coordination point for [4Fe-4S] cluster.

It belongs to the NifH/BchL/ChlL family. As to quaternary structure, homodimer. [4Fe-4S] cluster serves as cofactor. The reversible ADP-ribosylation of Arg-102 inactivates the nitrogenase reductase and regulates nitrogenase activity.

The catalysed reaction is N2 + 8 reduced [2Fe-2S]-[ferredoxin] + 16 ATP + 16 H2O = H2 + 8 oxidized [2Fe-2S]-[ferredoxin] + 2 NH4(+) + 16 ADP + 16 phosphate + 6 H(+). In terms of biological role, the key enzymatic reactions in nitrogen fixation are catalyzed by the nitrogenase complex, which has 2 components: the iron protein and the molybdenum-iron protein. This is Nitrogenase iron protein from Rhodopseudomonas palustris (strain BisB5).